The sequence spans 117 residues: Large ribosomal subunit protein bL20c (117 aa).

It belongs to the bacterial ribosomal protein bL20 family.

It localises to the plastid. The protein localises to the chloroplast. In terms of biological role, binds directly to 23S ribosomal RNA and is necessary for the in vitro assembly process of the 50S ribosomal subunit. It is not involved in the protein synthesizing functions of that subunit. In Bigelowiella natans (Pedinomonas minutissima), this protein is Large ribosomal subunit protein bL20c (rpl20).